Here is a 598-residue protein sequence, read N- to C-terminus: Elongation factor 4 (598 aa).

One can recognise a tr-type G domain in the interval 4–186; that stretch reads KHIRNFSIIA…VIVRQIPPPE (183 aa). GTP contacts are provided by residues 16 to 21 and 133 to 136; these read DHGKST and NKID.

The protein belongs to the TRAFAC class translation factor GTPase superfamily. Classic translation factor GTPase family. LepA subfamily.

Its subcellular location is the cell inner membrane. The enzyme catalyses GTP + H2O = GDP + phosphate + H(+). Its function is as follows. Required for accurate and efficient protein synthesis under certain stress conditions. May act as a fidelity factor of the translation reaction, by catalyzing a one-codon backward translocation of tRNAs on improperly translocated ribosomes. Back-translocation proceeds from a post-translocation (POST) complex to a pre-translocation (PRE) complex, thus giving elongation factor G a second chance to translocate the tRNAs correctly. Binds to ribosomes in a GTP-dependent manner. The chain is Elongation factor 4 from Pseudoalteromonas atlantica (strain T6c / ATCC BAA-1087).